An 84-amino-acid polypeptide reads, in one-letter code: Large ribosomal subunit protein bL28 (84 aa).

The protein belongs to the bacterial ribosomal protein bL28 family.

This Deinococcus geothermalis (strain DSM 11300 / CIP 105573 / AG-3a) protein is Large ribosomal subunit protein bL28.